A 272-amino-acid polypeptide reads, in one-letter code: Putative pyruvate, phosphate dikinase regulatory protein (272 aa).

153–160 serves as a coordination point for ADP; the sequence is GVSRTSKT.

It belongs to the pyruvate, phosphate/water dikinase regulatory protein family. PDRP subfamily.

It carries out the reaction N(tele)-phospho-L-histidyl/L-threonyl-[pyruvate, phosphate dikinase] + ADP = N(tele)-phospho-L-histidyl/O-phospho-L-threonyl-[pyruvate, phosphate dikinase] + AMP + H(+). The enzyme catalyses N(tele)-phospho-L-histidyl/O-phospho-L-threonyl-[pyruvate, phosphate dikinase] + phosphate + H(+) = N(tele)-phospho-L-histidyl/L-threonyl-[pyruvate, phosphate dikinase] + diphosphate. Bifunctional serine/threonine kinase and phosphorylase involved in the regulation of the pyruvate, phosphate dikinase (PPDK) by catalyzing its phosphorylation/dephosphorylation. This Chelativorans sp. (strain BNC1) protein is Putative pyruvate, phosphate dikinase regulatory protein.